We begin with the raw amino-acid sequence, 319 residues long: Pantothenate kinase (319 aa).

97–104 is an ATP binding site; that stretch reads GSVAVGKS.

Belongs to the prokaryotic pantothenate kinase family.

It is found in the cytoplasm. The catalysed reaction is (R)-pantothenate + ATP = (R)-4'-phosphopantothenate + ADP + H(+). Its pathway is cofactor biosynthesis; coenzyme A biosynthesis; CoA from (R)-pantothenate: step 1/5. The protein is Pantothenate kinase of Chelativorans sp. (strain BNC1).